The chain runs to 222 residues: Urease accessory protein UreF (222 aa).

This sequence belongs to the UreF family. In terms of assembly, ureD, UreF and UreG form a complex that acts as a GTP-hydrolysis-dependent molecular chaperone, activating the urease apoprotein by helping to assemble the nickel containing metallocenter of UreC. The UreE protein probably delivers the nickel.

The protein localises to the cytoplasm. Its function is as follows. Required for maturation of urease via the functional incorporation of the urease nickel metallocenter. The sequence is that of Urease accessory protein UreF from Roseobacter denitrificans (strain ATCC 33942 / OCh 114) (Erythrobacter sp. (strain OCh 114)).